Consider the following 308-residue polypeptide: Protoheme IX farnesyltransferase 2 (308 aa).

9 helical membrane-spanning segments follow: residues 20–40 (VTKP…FLLA), 47–67 (AVLM…GCAI), 92–114 (IPLK…LLAW), 118–137 (LAAL…LYSL), 144–164 (VYGT…GYCA), 174–194 (LILL…IAIF), 218–238 (LHIV…PLAG), 240–260 (TGVG…LMAL), and 275–295 (QVFG…ALDF).

The protein belongs to the UbiA prenyltransferase family. Protoheme IX farnesyltransferase subfamily.

It localises to the cell inner membrane. The enzyme catalyses heme b + (2E,6E)-farnesyl diphosphate + H2O = Fe(II)-heme o + diphosphate. It functions in the pathway porphyrin-containing compound metabolism; heme O biosynthesis; heme O from protoheme: step 1/1. In terms of biological role, converts heme B (protoheme IX) to heme O by substitution of the vinyl group on carbon 2 of heme B porphyrin ring with a hydroxyethyl farnesyl side group. This is Protoheme IX farnesyltransferase 2 from Shewanella loihica (strain ATCC BAA-1088 / PV-4).